We begin with the raw amino-acid sequence, 153 residues long: 3-hydroxyacyl-[acyl-carrier-protein] dehydratase FabZ (153 aa).

The active site involves His54.

It belongs to the thioester dehydratase family. FabZ subfamily.

It is found in the cytoplasm. It carries out the reaction a (3R)-hydroxyacyl-[ACP] = a (2E)-enoyl-[ACP] + H2O. Its function is as follows. Involved in unsaturated fatty acids biosynthesis. Catalyzes the dehydration of short chain beta-hydroxyacyl-ACPs and long chain saturated and unsaturated beta-hydroxyacyl-ACPs. The polypeptide is 3-hydroxyacyl-[acyl-carrier-protein] dehydratase FabZ (Chlamydia pneumoniae (Chlamydophila pneumoniae)).